The following is a 219-amino-acid chain: Cytidylate kinase (219 aa).

Residue 15–23 (GPAASGKGT) coordinates ATP.

The protein belongs to the cytidylate kinase family. Type 1 subfamily.

The protein localises to the cytoplasm. It catalyses the reaction CMP + ATP = CDP + ADP. It carries out the reaction dCMP + ATP = dCDP + ADP. This Brucella melitensis biotype 1 (strain ATCC 23456 / CCUG 17765 / NCTC 10094 / 16M) protein is Cytidylate kinase.